The sequence spans 232 residues: 2,3,4,5-tetrahydropyridine-2,6-dicarboxylate N-acetyltransferase (232 aa).

Belongs to the transferase hexapeptide repeat family. DapH subfamily.

The enzyme catalyses (S)-2,3,4,5-tetrahydrodipicolinate + acetyl-CoA + H2O = L-2-acetamido-6-oxoheptanedioate + CoA. It functions in the pathway amino-acid biosynthesis; L-lysine biosynthesis via DAP pathway; LL-2,6-diaminopimelate from (S)-tetrahydrodipicolinate (acetylase route): step 1/3. Its function is as follows. Catalyzes the transfer of an acetyl group from acetyl-CoA to tetrahydrodipicolinate. The sequence is that of 2,3,4,5-tetrahydropyridine-2,6-dicarboxylate N-acetyltransferase from Streptococcus pneumoniae (strain Taiwan19F-14).